The following is a 363-amino-acid chain: MAGNSIGQLFRVTTCGESHGVGLMAIVDGVPPGLELCEEDLQKDLDRRKPGTSKFATQRKEPDQVKIISGVFEGKTTGTSIGLYIENTDQKSKDYGNIAQTFRPGHADYTYTQKYGFRDYRGGGRSSARETAMRVAAGAIAKKYLAEKFGLVVRGHVIQIGNEVAEKLDWNEVSQNPFFCGDVDAVPRFEALVTSLREQGTSCGAKLEILAEQVPVGWGEPVFDRLDADIAHAMMSINAVKGVEIGDGFAVAGQFGHETRDELSTQGFLANHAGGILGGISSGQTIRVAIALKPTASITTSGKTINLDREDTDVLTKGRHDPCVGVRATPIAEAMLAIVLMDHFLRHRAQNADVVMPFEPIAP.

NADP(+) is bound at residue Arg-48. FMN is bound by residues 125–127, 238–239, Gly-278, 293–297, and Arg-319; these read RSS, NA, and KPTAS.

This sequence belongs to the chorismate synthase family. In terms of assembly, homotetramer. Requires FMNH2 as cofactor.

It carries out the reaction 5-O-(1-carboxyvinyl)-3-phosphoshikimate = chorismate + phosphate. It participates in metabolic intermediate biosynthesis; chorismate biosynthesis; chorismate from D-erythrose 4-phosphate and phosphoenolpyruvate: step 7/7. Its function is as follows. Catalyzes the anti-1,4-elimination of the C-3 phosphate and the C-6 proR hydrogen from 5-enolpyruvylshikimate-3-phosphate (EPSP) to yield chorismate, which is the branch point compound that serves as the starting substrate for the three terminal pathways of aromatic amino acid biosynthesis. This reaction introduces a second double bond into the aromatic ring system. The sequence is that of Chorismate synthase from Acinetobacter baylyi (strain ATCC 33305 / BD413 / ADP1).